A 141-amino-acid polypeptide reads, in one-letter code: Perlwapin-like protein (141 aa).

A signal peptide spans 1–19; the sequence is MNVYFILFLGVFAFIEVNC. The 49-residue stretch at 23-71 folds into the WAP domain; the sequence is KSKSLGTCPKLDVSTVCVVDYKFNCLFQKQCPSGYRCCTYGCNRRCAAV. 6 disulfide bridges follow: Cys30–Cys60, Cys39–Cys64, Cys47–Cys59, Cys53–Cys68, Cys81–Cys105, and Cys92–Cys104.

As to expression, component of the organic matrix of calcified shell layers like nacre and prisms.

The protein localises to the secreted. This chain is Perlwapin-like protein, found in Mytilus galloprovincialis (Mediterranean mussel).